Here is a 385-residue protein sequence, read N- to C-terminus: 8-amino-7-oxononanoate synthase (385 aa).

Position 23 (Arg-23) interacts with substrate. 110–111 serves as a coordination point for pyridoxal 5'-phosphate; the sequence is GF. His-135 contacts substrate. The pyridoxal 5'-phosphate site is built by Ser-180, His-208, and Thr-234. Lys-237 carries the N6-(pyridoxal phosphate)lysine modification. Thr-350 contacts substrate.

The protein belongs to the class-II pyridoxal-phosphate-dependent aminotransferase family. BioF subfamily. Homodimer. It depends on pyridoxal 5'-phosphate as a cofactor.

It catalyses the reaction 6-carboxyhexanoyl-[ACP] + L-alanine + H(+) = (8S)-8-amino-7-oxononanoate + holo-[ACP] + CO2. Its pathway is cofactor biosynthesis; biotin biosynthesis. Its function is as follows. Catalyzes the decarboxylative condensation of pimeloyl-[acyl-carrier protein] and L-alanine to produce 8-amino-7-oxononanoate (AON), [acyl-carrier protein], and carbon dioxide. In Vibrio vulnificus (strain CMCP6), this protein is 8-amino-7-oxononanoate synthase.